The chain runs to 248 residues: Ribonuclease PH (248 aa).

Phosphate-binding positions include Arg-86 and 124 to 126; that span reads GTR.

Belongs to the RNase PH family. Homohexameric ring arranged as a trimer of dimers.

The enzyme catalyses tRNA(n+1) + phosphate = tRNA(n) + a ribonucleoside 5'-diphosphate. Functionally, phosphorolytic 3'-5' exoribonuclease that plays an important role in tRNA 3'-end maturation. Removes nucleotide residues following the 3'-CCA terminus of tRNAs; can also add nucleotides to the ends of RNA molecules by using nucleoside diphosphates as substrates, but this may not be physiologically important. Probably plays a role in initiation of 16S rRNA degradation (leading to ribosome degradation) during starvation. This Clostridium perfringens (strain 13 / Type A) protein is Ribonuclease PH.